We begin with the raw amino-acid sequence, 213 residues long: Protein GrpE (213 aa).

Basic and acidic residues predominate over residues 1 to 23; that stretch reads MSDEKKPEAETSESLQKREEKLA. Residues 1–43 form a disordered region; sequence MSDEKKPEAETSESLQKREEKLAETLASEPAAQGEAEDAAAAG. A compositionally biased stretch (low complexity) spans 29–43; it reads EPAAQGEAEDAAAAG.

Belongs to the GrpE family. As to quaternary structure, homodimer.

The protein resides in the cytoplasm. Its function is as follows. Participates actively in the response to hyperosmotic and heat shock by preventing the aggregation of stress-denatured proteins, in association with DnaK and GrpE. It is the nucleotide exchange factor for DnaK and may function as a thermosensor. Unfolded proteins bind initially to DnaJ; upon interaction with the DnaJ-bound protein, DnaK hydrolyzes its bound ATP, resulting in the formation of a stable complex. GrpE releases ADP from DnaK; ATP binding to DnaK triggers the release of the substrate protein, thus completing the reaction cycle. Several rounds of ATP-dependent interactions between DnaJ, DnaK and GrpE are required for fully efficient folding. The sequence is that of Protein GrpE from Parvibaculum lavamentivorans (strain DS-1 / DSM 13023 / NCIMB 13966).